We begin with the raw amino-acid sequence, 466 residues long: MEEAEGVAAAPGPASGLAFRGRRAMSGSWERDQQVEAAQRTLVEVLGPYEPLLSRVQAALVWERPARSALWCLGLNAAFWFFALTSLRFVFLLAFSLMIIVCIDQWKNKIWPEINVPRPDALDNESWGFVHPRLLSVPELCHHVAEVWVSGTIFIRNLLLFKKQNPGKFCLLSCGVLTFLAMLGRYIPGLLLSYLMLVIIMMWPLAVYHRLWDRAYVRLKPVLQRLDFSVRGYMMSKQRERQLRRRALHSERATDSHSDSEEELAAFCPQLDDSTVARELAITDSEHSDAEVSCTENGTFNLSRGQTPLTEGSEDLDGHSDPEESFARDLPDFPSINVDPAGLDDEDDTSIGMPSLMYRSPPGAGDTQVLPASRNEAALPELLLSSLPGGSNLTSNLASLVSQGMIQLALSEASQTDPSGPPPRRATRGFLRAPSSDLDTDAEGDDFELLDQSELNQLDPASSRSH.

At 1-80 the chain is on the cytoplasmic side; it reads MEEAEGVAAA…WCLGLNAAFW (80 aa). Position 26 is a phosphoserine (serine 26). The chain crosses the membrane as a helical span at residues 81–101; sequence FFALTSLRFVFLLAFSLMIIV. Residues 102–168 are Lumenal-facing; the sequence is CIDQWKNKIW…LLFKKQNPGK (67 aa). Residues 169–187 form a helical membrane-spanning segment; that stretch reads FCLLSCGVLTFLAMLGRYI. Residues 188 to 192 lie on the Cytoplasmic side of the membrane; it reads PGLLL. Residues 193 to 211 form a helical membrane-spanning segment; sequence SYLMLVIIMMWPLAVYHRL. The Lumenal portion of the chain corresponds to 212–381; it reads WDRAYVRLKP…ASRNEAALPE (170 aa). A disordered region spans residues 244 to 263; it reads RRRALHSERATDSHSDSEEE. Positions 248 to 259 are enriched in basic and acidic residues; sequence LHSERATDSHSD. Position 254 is a phosphothreonine (threonine 254). 2 positions are modified to phosphoserine: serine 258 and serine 260. Position 283 is a phosphothreonine (threonine 283). Residues serine 285, serine 288, serine 293, and serine 303 each carry the phosphoserine modification. Residues 285–335 form a disordered region; sequence SEHSDAEVSCTENGTFNLSRGQTPLTEGSEDLDGHSDPEESFARDLPDFPS. A compositionally biased stretch (polar residues) spans 294–310; sequence CTENGTFNLSRGQTPLT. A phosphothreonine mark is found at threonine 307 and threonine 310. Phosphoserine is present on residues serine 313, serine 320, and serine 360. Residues 316 to 331 are compositionally biased toward basic and acidic residues; it reads LDGHSDPEESFARDLP. The helical transmembrane segment at 382-401 threads the bilayer; that stretch reads LLLSSLPGGSNLTSNLASLV. Residues 402–466 lie on the Cytoplasmic side of the membrane; that stretch reads SQGMIQLALS…QLDPASSRSH (65 aa). A disordered region spans residues 412–444; sequence EASQTDPSGPPPRRATRGFLRAPSSDLDTDAEG. A Phosphothreonine modification is found at threonine 440. The short motif at 445–450 is the LIR motif element; that stretch reads DDFELL.

This sequence belongs to the RETREG family. In terms of assembly, interacts with ATG8 family modifier proteins MAP1LC3A, MAP1LC3B, GABARAPL1 and GABARAPL2. Also interacts with ATG8 family modifier protein GABARAP. Interacts with CANX. Interacts with RTN4 isoform B. Widely expressed with highest levels in brain, lung, liver, muscle and spleen (protein level). Mainly expressed in the central nervous system and in parenchymatous organs including liver, lung and kidney.

The protein localises to the endoplasmic reticulum membrane. Its function is as follows. Endoplasmic reticulum (ER)-anchored autophagy regulator which exists in an inactive state under basal conditions but is activated following cellular stress. When activated, induces ER fragmentation and mediates ER delivery into lysosomes through sequestration into autophagosomes via interaction with ATG8 family proteins. Promotes ER membrane curvature and ER tubulation required for subsequent ER fragmentation and engulfment into autophagosomes. Required for collagen quality control in a LIR motif-dependent manner. Mediates NRF1-enhanced neurite outgrowth. The sequence is that of Reticulophagy regulator 3 (Retreg3) from Mus musculus (Mouse).